We begin with the raw amino-acid sequence, 537 residues long: CTP synthase (537 aa).

Residues 1–267 (MAKYIFVTGG…DEYVIKRLNL (267 aa)) form an amidoligase domain region. CTP is bound at residue Ser13. Ser13 is a binding site for UTP. Residue 14 to 19 (SLGKGI) participates in ATP binding. Tyr54 lines the L-glutamine pocket. Asp71 lines the ATP pocket. 2 residues coordinate Mg(2+): Asp71 and Glu141. CTP-binding positions include 148 to 150 (DIE), 188 to 193 (KTKPTQ), and Lys224. Residues 188-193 (KTKPTQ) and Lys224 each bind UTP. 240 to 242 (RDV) serves as a coordination point for ATP. Positions 292 to 534 (EVALVGKYVD…VKAMLNLKIN (243 aa)) constitute a Glutamine amidotransferase type-1 domain. An L-glutamine-binding site is contributed by Gly354. Cys381 acts as the Nucleophile; for glutamine hydrolysis in catalysis. L-glutamine contacts are provided by residues 382–385 (LGMQ), Glu405, and Arg462. Active-site residues include His507 and Glu509.

The protein belongs to the CTP synthase family. Homotetramer.

It carries out the reaction UTP + L-glutamine + ATP + H2O = CTP + L-glutamate + ADP + phosphate + 2 H(+). It catalyses the reaction L-glutamine + H2O = L-glutamate + NH4(+). The enzyme catalyses UTP + NH4(+) + ATP = CTP + ADP + phosphate + 2 H(+). It functions in the pathway pyrimidine metabolism; CTP biosynthesis via de novo pathway; CTP from UDP: step 2/2. Its activity is regulated as follows. Allosterically activated by GTP, when glutamine is the substrate; GTP has no effect on the reaction when ammonia is the substrate. The allosteric effector GTP functions by stabilizing the protein conformation that binds the tetrahedral intermediate(s) formed during glutamine hydrolysis. Inhibited by the product CTP, via allosteric rather than competitive inhibition. Functionally, catalyzes the ATP-dependent amination of UTP to CTP with either L-glutamine or ammonia as the source of nitrogen. Regulates intracellular CTP levels through interactions with the four ribonucleotide triphosphates. The sequence is that of CTP synthase from Caldanaerobacter subterraneus subsp. tengcongensis (strain DSM 15242 / JCM 11007 / NBRC 100824 / MB4) (Thermoanaerobacter tengcongensis).